The following is a 198-amino-acid chain: Dual specificity protein phosphatase 14 (198 aa).

Residues 26–167 (GIAQITSSLF…LIDYERQLFG (142 aa)) enclose the Tyrosine-protein phosphatase domain. Residue Cys-111 is the Phosphocysteine intermediate of the active site.

The protein belongs to the protein-tyrosine phosphatase family. Non-receptor class dual specificity subfamily. As to quaternary structure, interacts with CD28.

The enzyme catalyses O-phospho-L-tyrosyl-[protein] + H2O = L-tyrosyl-[protein] + phosphate. The catalysed reaction is O-phospho-L-seryl-[protein] + H2O = L-seryl-[protein] + phosphate. It carries out the reaction O-phospho-L-threonyl-[protein] + H2O = L-threonyl-[protein] + phosphate. Its function is as follows. Involved in the inactivation of MAP kinases. Dephosphorylates ERK, JNK and p38 MAP-kinases. Plays a negative role in TCR signaling by dephosphorylating MAP3K7 adapter TAB1 leading to its inactivation. The polypeptide is Dual specificity protein phosphatase 14 (DUSP14) (Bos taurus (Bovine)).